The chain runs to 154 residues: Interleukin-2 (154 aa).

Residues 1–20 (MYRMQLLSCIALSLALVTNS) form the signal peptide. T23 is a glycosylation site (O-linked (GalNAc...) threonine). A disulfide bridge links C78 with C126.

It belongs to the IL-2 family.

It localises to the secreted. Its function is as follows. Cytokine produced by activated CD4-positive helper T-cells and to a lesser extend activated CD8-positive T-cells and natural killer (NK) cells that plays pivotal roles in the immune response and tolerance. Binds to a receptor complex composed of either the high-affinity trimeric IL-2R (IL2RA/CD25, IL2RB/CD122 and IL2RG/CD132) or the low-affinity dimeric IL-2R (IL2RB and IL2RG). Interaction with the receptor leads to oligomerization and conformation changes in the IL-2R subunits resulting in downstream signaling starting with phosphorylation of JAK1 and JAK3. In turn, JAK1 and JAK3 phosphorylate the receptor to form a docking site leading to the phosphorylation of several substrates including STAT5. This process leads to activation of several pathways including STAT, phosphoinositide-3-kinase/PI3K and mitogen-activated protein kinase/MAPK pathways. Functions as a T-cell growth factor and can increase NK-cell cytolytic activity as well. Promotes strong proliferation of activated B-cells and subsequently immunoglobulin production. Plays a pivotal role in regulating the adaptive immune system by controlling the survival and proliferation of regulatory T-cells, which are required for the maintenance of immune tolerance. Moreover, participates in the differentiation and homeostasis of effector T-cell subsets, including Th1, Th2, Th17 as well as memory CD8-positive T-cells. The polypeptide is Interleukin-2 (IL2) (Macaca mulatta (Rhesus macaque)).